A 206-amino-acid polypeptide reads, in one-letter code: Large ribosomal subunit protein mL62 (206 aa).

Residues 1–29 (MATAWGLRWGLSRTGTLLLAPPARCARRA) constitute a mitochondrion transit peptide. At Gln90 the chain carries N5-methylglutamine.

The protein belongs to the prokaryotic/mitochondrial release factor family. Mitochondrion-specific ribosomal protein mL62 subfamily. In terms of assembly, component of the mitochondrial ribosome large subunit (39S) which comprises a 16S rRNA and about 50 distinct proteins. In terms of processing, methylation of glutamine in the GGQ triplet by HEMK1.

It localises to the mitochondrion. It carries out the reaction an N-acyl-L-alpha-aminoacyl-tRNA + H2O = an N-acyl-L-amino acid + a tRNA + H(+). Essential peptidyl-tRNA hydrolase component of the mitochondrial large ribosomal subunit. Acts as a codon-independent translation release factor that has lost all stop codon specificity and directs the termination of translation in mitochondrion, possibly in case of abortive elongation. May be involved in the hydrolysis of peptidyl-tRNAs that have been prematurely terminated and thus in the recycling of stalled mitochondrial ribosomes. The chain is Large ribosomal subunit protein mL62 from Mus musculus (Mouse).